We begin with the raw amino-acid sequence, 351 residues long: UDP-3-O-acylglucosamine N-acyltransferase (351 aa).

His-257 (proton acceptor) is an active-site residue.

Belongs to the transferase hexapeptide repeat family. LpxD subfamily. As to quaternary structure, homotrimer.

The catalysed reaction is a UDP-3-O-[(3R)-3-hydroxyacyl]-alpha-D-glucosamine + a (3R)-hydroxyacyl-[ACP] = a UDP-2-N,3-O-bis[(3R)-3-hydroxyacyl]-alpha-D-glucosamine + holo-[ACP] + H(+). It functions in the pathway bacterial outer membrane biogenesis; LPS lipid A biosynthesis. In terms of biological role, catalyzes the N-acylation of UDP-3-O-acylglucosamine using 3-hydroxyacyl-ACP as the acyl donor. Is involved in the biosynthesis of lipid A, a phosphorylated glycolipid that anchors the lipopolysaccharide to the outer membrane of the cell. The sequence is that of UDP-3-O-acylglucosamine N-acyltransferase from Methylorubrum extorquens (strain PA1) (Methylobacterium extorquens).